The chain runs to 507 residues: (6-4) photolyase (507 aa).

6,7-dimethyl-8-(1-D-ribityl)lumazine contacts are provided by residues 9–10 (GD), 32–40 (CEVMAEASY), and G105. FAD-binding positions include 265-269 (HSLLS) and N273. [4Fe-4S] cluster is bound at residue C350. FAD is bound by residues 363–366 (YAHH), D397, and N406. 3 residues coordinate [4Fe-4S] cluster: C438, C441, and C454.

The protein belongs to the iron-sulfur bacterial cryptochrome/photolyase (FeS-BCP) family. Requires FAD as cofactor. It depends on 6,7-dimethyl-8-(1-D-ribityl)lumazine as a cofactor. [4Fe-4S] cluster is required as a cofactor.

It catalyses the reaction (6-4) photoproduct (in DNA) = 2 pyrimidine residues (in DNA).. Its function is as follows. Photolyase involved in the repair of UV-induced (6-4) lesions in DNA. Catalyzes the photoreactivation of (6-4) pyrimidine-pyrimidone photoproducts by using blue-light energy. Can repair (6-4) photoproducts in ssDNA as well as in dsDNA. This chain is (6-4) photolyase, found in Agrobacterium fabrum (strain C58 / ATCC 33970) (Agrobacterium tumefaciens (strain C58)).